Here is a 319-residue protein sequence, read N- to C-terminus: Secreted effector protein sopD2 (319 aa).

A Required to target late endocytic compartments motif is present at residues 37 to 44 (WDRFKDCF).

This sequence belongs to the SopD family.

The protein resides in the secreted. Its subcellular location is the host cell membrane. Functionally, effector proteins function to alter host cell physiology and promote bacterial survival in host tissues. Contributes to the formation of Salmonella-induced filaments (Sifs) in infected epithelial cells and to replication in macrophages. The protein is Secreted effector protein sopD2 (sopD2) of Salmonella typhimurium (strain LT2 / SGSC1412 / ATCC 700720).